The following is a 482-amino-acid chain: ATP synthase subunit beta (482 aa).

An ATP-binding site is contributed by 162–169 (GGAGVGKT).

As to quaternary structure, F-type ATPases have 2 components, CF(1) - the catalytic core - and CF(0) - the membrane proton channel. CF(1) has five subunits: alpha(3), beta(3), gamma(1), delta(1), epsilon(1). CF(0) has four main subunits: a(1), b(1), b'(1) and c(9-12).

The protein localises to the cellular thylakoid membrane. The enzyme catalyses ATP + H2O + 4 H(+)(in) = ADP + phosphate + 5 H(+)(out). Its activity is regulated as follows. Inhibited by dicyclohexylcarbodiimide. In terms of biological role, produces ATP from ADP in the presence of a proton gradient across the membrane. The catalytic sites are hosted primarily by the beta subunits. Its function is as follows. The complex from the organism is particularly stable to disruption and remains functional after 6 hrs at 55 degrees Celsius. The chain is ATP synthase subunit beta from Thermosynechococcus vestitus (strain NIES-2133 / IAM M-273 / BP-1).